The sequence spans 518 residues: Cytochrome P450 monooxygenase atnE (518 aa).

The helical transmembrane segment at 11 to 31 threads the bilayer; the sequence is FLAAFAVWMGVVVLAFAIFCV. Asparagine 184 carries an N-linked (GlcNAc...) asparagine glycan. Heme is bound at residue cysteine 458.

This sequence belongs to the cytochrome P450 family. Requires heme as cofactor.

The protein resides in the membrane. Its pathway is secondary metabolite biosynthesis. Cytochrome P450 monooxygenase; part of the gene cluster that mediates the biosynthesis of aspercryptins, linear lipopeptides built from six amino acids including 2 highly unusual and nonproteogenic amino acids, 2-amino-octanoic acid (2aoa) and 2-amino-dodecanol (2adol). The core structure of aspercryptins is as follows: Ser/Ala-Thr-Ile/Val-2aoa-Asn-2adol. The first step of aspercryptin biosynthesis is the generation of the fatty acid precursors, octanoic and dodecanoic acids, by the FAS subunits atnF and atnM. The fatty acid precursors are likely transformed into the corresponding alpha-amino fatty acids in three steps. First, they are hydroxylated by the cytochrome P450 monooxygenase atnE, then oxidized to the corresponding alpha-keto acids by the NAD(P)-dependent oxidoreductase atnD, and finally converted to the alpha-amino fatty acids by the PLP-dependent aminotransferases atnH or atnJ. the alpha-amino fatty acids, 2-amino-octanoic and 2-amino-dodecanoic acids, are recognized, activated, and covalently tethered to the NRPS atnA by its fourth and sixth adenylation domains. The second module of atnA is the Thr module and contains an epimerase (E) domain responsible for the epimerization of Thr to D-allo-Thr. Additionally, despite atnA having only one epimerase domain, the first amino acid of aspercryptin A1 is D-Ser, suggesting that serine is either loaded directly as D-Ser on the first module or that the epimerase domain in the threonine module epimerizes both L-Ser and L-Thr. After condensation of the hexapeptide of aspercryptin, the C-terminal reductase (TE) domain might be involved in the reductive release and production of the aldehyde hexapeptide. Further reduction would generate aspercryptins. The variety of aspercryptins produced reflects the flexibility of the atnA NRPS, allowing incorporation of alanine instead of serine, valine for isoleucine, and a C10 fatty amino alcohol instead of the C12 version. AtnB seems to be involved in the selectivity for Ile versus Val by the third module. Moreover, type B, C and D aspercryptins have an additional N-terminal cichorine, acetyl and propionyl group respectively. In Emericella nidulans (strain FGSC A4 / ATCC 38163 / CBS 112.46 / NRRL 194 / M139) (Aspergillus nidulans), this protein is Cytochrome P450 monooxygenase atnE.